The primary structure comprises 697 residues: Histone-lysine N-methyltransferase SETDB2 (697 aa).

One can recognise an MBD domain in the interval 172 to 242; it reads LKKENPLNLP…DNFSFSTQVQ (71 aa). The 75-residue stretch at 304–378 folds into the Pre-SET domain; sequence KCCSCTDGCL…LCQNRVVQHG (75 aa). Zn(2+) is bound by residues cysteine 306, cysteine 308, cysteine 312, cysteine 318, cysteine 320, cysteine 359, cysteine 363, cysteine 365, and cysteine 370. Residues 381-672 form the SET domain; the sequence is LRLQVFKTDT…AGTELTWDYN (292 aa). Residue 391-393 coordinates S-adenosyl-L-methionine; it reads KGW. Disordered stretches follow at residues 438-461 and 529-605; these read KEDN…HSDS and VHNS…STSP. The span at 565–581 shows a compositional bias: low complexity; it reads SGYVSEESSSSVISGGH. Residues arginine 626 and 629-630 contribute to the S-adenosyl-L-methionine site; that span reads NH. Zn(2+)-binding residues include cysteine 632, cysteine 685, cysteine 687, and cysteine 692.

It belongs to the class V-like SAM-binding methyltransferase superfamily.

Its subcellular location is the nucleus. It localises to the chromosome. It catalyses the reaction N(6),N(6)-dimethyl-L-lysyl(9)-[histone H3] + S-adenosyl-L-methionine = N(6),N(6),N(6)-trimethyl-L-lysyl(9)-[histone H3] + S-adenosyl-L-homocysteine + H(+). In terms of biological role, histone methyltransferase involved in left-right axis specification in early development and mitosis. Specifically trimethylates 'Lys-9' of histone H3 (H3K9me3). H3K9me3 represents a specific tag for epigenetic transcriptional repression by recruiting HP1 (CBX1, CBX3 and/or CBX5) proteins to methylated histones. Contributes to H3K9me3 in both the interspersed repetitive elements and centromere-associated repeats. Plays a role in chromosome condensation and segregation during mitosis. The polypeptide is Histone-lysine N-methyltransferase SETDB2 (setdb2) (Xenopus tropicalis (Western clawed frog)).